A 923-amino-acid polypeptide reads, in one-letter code: Protein translocase subunit SecA (923 aa).

ATP is bound by residues Gln86, Gly104–Thr108, and Asp512. Positions 906, 908, 917, and 918 each coordinate Zn(2+).

The protein belongs to the SecA family. Monomer and homodimer. Part of the essential Sec protein translocation apparatus which comprises SecA, SecYEG and auxiliary proteins SecDF-YajC and YidC. Zn(2+) serves as cofactor.

It is found in the cell inner membrane. It localises to the cytoplasm. The enzyme catalyses ATP + H2O + cellular proteinSide 1 = ADP + phosphate + cellular proteinSide 2.. In terms of biological role, part of the Sec protein translocase complex. Interacts with the SecYEG preprotein conducting channel. Has a central role in coupling the hydrolysis of ATP to the transfer of proteins into and across the cell membrane, serving both as a receptor for the preprotein-SecB complex and as an ATP-driven molecular motor driving the stepwise translocation of polypeptide chains across the membrane. The polypeptide is Protein translocase subunit SecA (Caulobacter vibrioides (strain ATCC 19089 / CIP 103742 / CB 15) (Caulobacter crescentus)).